A 64-amino-acid chain; its full sequence is MAKAANMIKVEQIGSPIRRHHSQRETLIGLKLNKIGRVAELQDTPEVRGMIGKVQHLVRVVDEK.

As to quaternary structure, part of the 50S ribosomal subunit. Post-translationally, the protein is methylated on either Ala-2 or Lys-3.

This is Large ribosomal subunit protein uL30 from Rhodopseudomonas palustris (strain ATCC BAA-98 / CGA009).